The chain runs to 1253 residues: Latent-transforming growth factor beta-binding protein 3 (1253 aa).

Residues 1–38 (MPGPRGAAHGLAPAMRQAGALGLLALLLLALLGPGGGA) form the signal peptide. N-linked (GlcNAc...) asparagine glycosylation occurs at Asn-86. The EGF-like 1 domain occupies 106–138 (RVVVCPLPCMNGGQCSSRNQCLCPPDFTGRFCQ). 3 cysteine pairs are disulfide-bonded: Cys-110–Cys-120, Cys-114–Cys-126, and Cys-128–Cys-137. The interval 244–270 (GPNAEGPASSQHLLPHPKPQHPRPPTQ) is disordered. The 55-residue stretch at 274–328 (GRCFQDTLPKQPCGSNPLPGLTKQEDCCGSIGTAWGQSKCHKCPQLQYTGVQKPG) folds into the TB 1 domain. 3 disulfides stabilise this stretch: Cys-276-Cys-300, Cys-286-Cys-313, and Cys-301-Cys-316. Residue Asn-346 is glycosylated (N-linked (GlcNAc...) asparagine). One can recognise an EGF-like 2; calcium-binding domain in the interval 352–392 (DINECAMPGMCRHGDCLNNPGSYRCVCPPGHSLGPSRTQCI). 7 disulfides stabilise this stretch: Cys-356–Cys-367, Cys-362–Cys-376, Cys-378–Cys-391, Cys-402–Cys-425, Cys-412–Cys-437, Cys-426–Cys-440, and Cys-427–Cys-452. In terms of domain architecture, TB 2 spans 400–452 (SLCFRLVSTEHQCQHPLTTRLTRQLCCCSVGKAWGARCQRCPADGTAAFKEIC). The segment at 475 to 555 (FSLFLHPDGP…PTFHRFLPDL (81 aa)) is disordered. The 42-residue stretch at 571-612 (ETDECRLNQNICGHGQCVPGPSDYSCHCNAGYRSHPQHRYCV) folds into the EGF-like 3 domain. Cystine bridges form between Cys-575–Cys-587, Cys-582–Cys-596, Cys-598–Cys-611, Cys-617–Cys-629, Cys-622–Cys-638, Cys-661–Cys-673, Cys-667–Cys-682, Cys-684–Cys-698, Cys-745–Cys-756, Cys-751–Cys-765, Cys-767–Cys-780, Cys-786–Cys-797, Cys-792–Cys-806, Cys-808–Cys-821, Cys-827–Cys-838, Cys-833–Cys-847, Cys-849–Cys-861, Cys-867–Cys-880, Cys-874–Cys-889, Cys-891–Cys-904, Cys-916–Cys-939, Cys-926–Cys-951, Cys-940–Cys-956, Cys-941–Cys-968, Cys-994–Cys-1007, Cys-1002–Cys-1016, Cys-1018–Cys-1031, Cys-1037–Cys-1048, Cys-1043–Cys-1057, Cys-1059–Cys-1072, Cys-1113–Cys-1127, and Cys-1114–Cys-1136. In terms of domain architecture, EGF-like 4; calcium-binding spans 613–656 (DVNECEAEPCGPGKGICMNTGGSYNCHCNRGYRLHVGAGGRSCV). The EGF-like 5; calcium-binding domain maps to 657 to 699 (DLNECTKPHLCGDGGFCINFPGHYKCNCYPGYRLKASRPPICE). The 41-residue stretch at 741-781 (DVNECSEGTPCSPGWCENLPGSYRCTCAQGYEPAQDGLSCI) folds into the EGF-like 6; calcium-binding domain. The region spanning 782-822 (DVDECEAGKVCQDGICTNTPGSFQCQCLSGYHLSRDRSRCE) is the EGF-like 7; calcium-binding domain. Positions 823–861 (DIDECDFPAACIGGDCINTNGSYRCLCPQGHRLVGGRKC) constitute an EGF-like 8; calcium-binding domain. Asn-842 is a glycosylation site (N-linked (GlcNAc...) asparagine). Positions 863-905 (DIDECSQDPGLCLPHGACENLQGSYVCVCDEGFTLTQDQHGCE) constitute an EGF-like 9; calcium-binding domain. One can recognise a TB 3 domain in the interval 914–968 (KECYLNFDDTVFCDSVLATNVTQQECCCSLGAGWGDHCEIYPCPVYSSAEFHSLC). Asn-933 is a glycosylation site (N-linked (GlcNAc...) asparagine). In terms of domain architecture, EGF-like 10; calcium-binding spans 990–1032 (DIDECILFGAEICKEGKCVNTQPGYECYCKQGFYYDGNLLECV). The EGF-like 11; calcium-binding domain occupies 1033 to 1072 (DVDECLDESNCRNGVCENTRGGYRCACTPPAEYSPAQRQC). The 51-residue stretch at 1086 to 1136 (EVCWGQRGEDGMCMGPLAGPALTFDDCCCRQGRGWGTQCRPCPPRGTGSQC) folds into the TB 4 domain. Residues 1138–1148 (TSQSESNSFWD) are compositionally biased toward polar residues. Residues 1138-1169 (TSQSESNSFWDTSPLLLGKSPRDEDSSEEDSD) form a disordered region. Positions 1204–1231 (DIDECRELNQRGLLCKSERCVNTSGSFR) constitute an EGF-like 12; calcium-binding domain. Cystine bridges form between Cys-1208-Cys-1223 and Cys-1218-Cys-1232. An N-linked (GlcNAc...) asparagine glycan is attached at Asn-1225.

The protein belongs to the LTBP family. In terms of assembly, forms part of the large latent transforming growth factor beta (TGFB1) precursor complex; removal is essential for activation of complex. Interacts with EFEMP2. In terms of processing, contains hydroxylated asparagine residues. Two intrachain disulfide bonds from the TB3 domain are rearranged upon TGFB1 binding, and form interchain bonds with TGFB1 propeptide, anchoring it to the extracellular matrix.

Its subcellular location is the secreted. It localises to the extracellular space. The protein localises to the extracellular matrix. Its function is as follows. Key regulator of transforming growth factor beta (TGFB1, TGFB2 and TGFB3) that controls TGF-beta activation by maintaining it in a latent state during storage in extracellular space. Associates specifically via disulfide bonds with the Latency-associated peptide (LAP), which is the regulatory chain of TGF-beta, and regulates integrin-dependent activation of TGF-beta. This is Latent-transforming growth factor beta-binding protein 3 (Ltbp3) from Mus musculus (Mouse).